The primary structure comprises 563 residues: Putative solute carrier family 26 member 10P (563 aa).

Helical transmembrane passes span 45-65, 75-91, 116-136, 152-172, and 352-372; these read ALLA…PVLI, LSTG…GSAV, VGVA…MFVL, ALTS…LLGL, and LAGL…GPFF. Positions 406-541 constitute an STAS domain; that stretch reads RVDFLLQVPG…VSVQDAAAYA (136 aa).

The protein belongs to the SLC26A/SulP transporter (TC 2.A.53) family.

Its subcellular location is the membrane. Its function is as follows. Chloride/bicarbonate exchanger. The sequence is that of Putative solute carrier family 26 member 10P (SLC26A10P) from Homo sapiens (Human).